Here is a 405-residue protein sequence, read N- to C-terminus: Acetyl-CoA decarbonylase/synthase complex subunit delta (405 aa).

This sequence belongs to the CdhD family. Heterodimer of delta and gamma chains. The ACDS complex is made up of alpha, epsilon, beta, gamma and delta chains with a probable stoichiometry of (alpha(2)epsilon(2))(4)-beta(8)-(gamma(1)delta(1))(8).

Part of a complex that catalyzes the reversible cleavage of acetyl-CoA, allowing autotrophic growth from CO(2). Probably maintains the overall quaternary structure of the ACDS complex. This is Acetyl-CoA decarbonylase/synthase complex subunit delta from Methanocaldococcus jannaschii (strain ATCC 43067 / DSM 2661 / JAL-1 / JCM 10045 / NBRC 100440) (Methanococcus jannaschii).